The following is a 484-amino-acid chain: Chromosomal replication initiator protein DnaA (484 aa).

Positions 1–73 are domain I, interacts with DnaA modulators; it reads MQEGKNIWSL…EILIEKGHNT (73 aa). The domain II stretch occupies residues 73-140; sequence TINVEFINSP…EEIHTKYRNP (68 aa). Residues 141-357 form a domain III, AAA+ region region; that stretch reads FLKKKYTFEN…AAVTKLKAHI (217 aa). The ATP site is built by glycine 185, glycine 187, lysine 188, and threonine 189. A domain IV, binds dsDNA region spans residues 358 to 484; that stretch reads DLEDIEIDTS…IELMNKINKK (127 aa).

This sequence belongs to the DnaA family. In terms of assembly, oligomerizes as a right-handed, spiral filament on DNA at oriC.

The protein localises to the cytoplasm. Plays an essential role in the initiation and regulation of chromosomal replication. ATP-DnaA binds to the origin of replication (oriC) to initiate formation of the DNA replication initiation complex once per cell cycle. Binds the DnaA box (a 9 base pair repeat at the origin) and separates the double-stranded (ds)DNA. Forms a right-handed helical filament on oriC DNA; dsDNA binds to the exterior of the filament while single-stranded (ss)DNA is stabiized in the filament's interior. The ATP-DnaA-oriC complex binds and stabilizes one strand of the AT-rich DNA unwinding element (DUE), permitting loading of DNA polymerase. After initiation quickly degrades to an ADP-DnaA complex that is not apt for DNA replication. Binds acidic phospholipids. This is Chromosomal replication initiator protein DnaA from Borrelia hermsii (strain HS1 / DAH).